Consider the following 162-residue polypeptide: Protein SLM4 (162 aa).

Residues 127–144 form a helical membrane-spanning segment; sequence LLLLFIAEGSFPYGLLVI.

In terms of assembly, component of the GSE complex composed of GTR1, GTR2, SLM4, MEH1 and LTV1. Component of the EGO complex, at least composed of GTR2, SLM4 and MEH1.

The protein resides in the vacuole membrane. Component of the GSE complex, a GTPase complex required for intracellular sorting of GAP1 out of the endosome. Component of the EGO complex, a complex involved in the regulation of microautophagy. This is Protein SLM4 (SLM4) from Saccharomyces cerevisiae (strain ATCC 204508 / S288c) (Baker's yeast).